The chain runs to 575 residues: Proline--tRNA ligase 1 (575 aa).

Belongs to the class-II aminoacyl-tRNA synthetase family. ProS type 1 subfamily. In terms of assembly, homodimer.

The protein resides in the cytoplasm. It catalyses the reaction tRNA(Pro) + L-proline + ATP = L-prolyl-tRNA(Pro) + AMP + diphosphate. In terms of biological role, catalyzes the attachment of proline to tRNA(Pro) in a two-step reaction: proline is first activated by ATP to form Pro-AMP and then transferred to the acceptor end of tRNA(Pro). As ProRS can inadvertently accommodate and process non-cognate amino acids such as alanine and cysteine, to avoid such errors it has two additional distinct editing activities against alanine. One activity is designated as 'pretransfer' editing and involves the tRNA(Pro)-independent hydrolysis of activated Ala-AMP. The other activity is designated 'posttransfer' editing and involves deacylation of mischarged Ala-tRNA(Pro). The misacylated Cys-tRNA(Pro) is not edited by ProRS. The sequence is that of Proline--tRNA ligase 1 from Anaeromyxobacter dehalogenans (strain 2CP-C).